The chain runs to 105 residues: MLLNKITFFERFEHDILSGAKTITLRDEAESHVITGQILPVSTFETDRWFCDIQIIDVTPVKLTELTEMHAKQENMTLPQLRDVIAEIYPGLEQLFMIRFMILSQ.

The ASCH domain occupies 7–93 (TFFERFEHDI…VIAEIYPGLE (87 aa)). The Proton acceptor role is filled by K21. The Nucleophile role is filled by T24. E74 (proton donor) is an active-site residue.

Belongs to the N(4)-acetylcytidine amidohydrolase family.

The catalysed reaction is N(4)-acetylcytidine + H2O = cytidine + acetate + H(+). It catalyses the reaction N(4)-acetyl-2'-deoxycytidine + H2O = 2'-deoxycytidine + acetate + H(+). The enzyme catalyses N(4)-acetylcytosine + H2O = cytosine + acetate + H(+). Catalyzes the hydrolysis of N(4)-acetylcytidine (ac4C). This Shewanella baltica (strain OS185) protein is N(4)-acetylcytidine amidohydrolase.